We begin with the raw amino-acid sequence, 474 residues long: Transmembrane transporter FVEG_12640 (474 aa).

Over residues 1–15 (MASPTISSMEQYTPS) the composition is skewed to polar residues. A disordered region spans residues 1-39 (MASPTISSMEQYTPSSKDEKIVPLHGDAAGSDTEKGESR). 10 helical membrane-spanning segments follow: residues 72–92 (ILAI…LCIV), 133–153 (LVGV…IVTS), 164–184 (GTCT…FSSI), 192–212 (WLTW…VVAV), 231–251 (WAPI…NIFI), 275–295 (ACLV…LVIY), 317–337 (VAYG…QHVA), 364–384 (LGIN…VPIL), 387–407 (LLGL…PALL), and 431–451 (LIMI…AVLI).

It belongs to the amino acid/polyamine transporter 2 family.

It is found in the membrane. Functionally, transmembrane transporter; part of the Fusarium detoxification of benzoxazolinone cluster 2 (FDB2) involved in the degradation of benzoxazolinones produced by the host plant. Maize, wheat, and rye produce the 2 benzoxazinone phytoanticipins 2,4-dihy-droxy-7-methoxy-1,4-benzoxazin-3-one (DIMBOA) and 2,4-dihydroxy-1,4-benzoxazin-3-one (DIBOA) that, due to their inherent instability once released, spontaneously degrade to the more stable corresponding benzoxazolinones, 6-methoxy-2-benzoxazolinone (MBOA) and 2-benzoxazolinone (BOA), respectively. Might be involved in the transport of metabolites of benzoxazolinone degradation. The chain is Transmembrane transporter FVEG_12640 from Gibberella moniliformis (strain M3125 / FGSC 7600) (Maize ear and stalk rot fungus).